The sequence spans 505 residues: Glutamate--tRNA ligase (505 aa).

The 'HIGH' region signature appears at 11–21; that stretch reads PSPTGPLHIGG. A 'KMSKS' region motif is present at residues 260–264; sequence KLSKR. Lysine 263 lines the ATP pocket.

It belongs to the class-I aminoacyl-tRNA synthetase family. Glutamate--tRNA ligase type 1 subfamily. As to quaternary structure, monomer.

It localises to the cytoplasm. The catalysed reaction is tRNA(Glu) + L-glutamate + ATP = L-glutamyl-tRNA(Glu) + AMP + diphosphate. Functionally, catalyzes the attachment of glutamate to tRNA(Glu) in a two-step reaction: glutamate is first activated by ATP to form Glu-AMP and then transferred to the acceptor end of tRNA(Glu). In Christiangramia forsetii (strain DSM 17595 / CGMCC 1.15422 / KT0803) (Gramella forsetii), this protein is Glutamate--tRNA ligase.